The sequence spans 883 residues: MTTEHNEINMPTKYEPSNVEAGKYKWWLEKEFFKAEGNTDKEPYSIVIPPPNVTGKLHLGHAWDTTLQDIITRMKRMQGFDTLYLPGMDHAGIATQAKVEAKLKESNISRYDLGRENFVDKTWEWKEEYAEFIREQWEKLGLGLDYSRERFTLDDGLSDAVKKVFVTLYNKGLIYRGQYIINWDPEAKTALSDIEVIHKDIEGSFYHLKYPLTDGSGYLEVATTRPETIPGDTAVAVHPKDERYQHLIGKTIMLPILNREIPIVADEYVEREFGSGAVKITPAHDPNDFEVGNRHNLPRIIVMHEDGTMNENAGKYDGLDRFVARKEIIQDFKDLGLFIKQEPHLHSVGHSERTGAVVEPYLSLQWFVKMEPLAAEALELQKTENKVNFVPARFEKTYETWMDNIHDWCISRQLWWGHRIPAWYHKETGEIYVGEKEPENLSEWEQDEDVLDTWFSSALWPFSTMGWPDTESPDFQHFFPTNTLVTGYDIIFFWVSRMIFQSVEFTGERPFKDTLIHGLVRDSEGRKMSKSLGNGVDPIEVIDKYGADSLRYTLATGSSPGQDLKFSYEKVESTWNFINKIWNASRFVLMNLDGMKYNEIDLSNVTEVSDKWILTRLNETIQAVTSLGEKYEFGEVGRTLYNFIWDDFCDWYIEIAKIPLYGEDEVAKQTTRSVLAYTLNATMRLLHPFMPFVTEEIWQNLPHEGESITIAEWPKVNEQQIDTKSSTAMATLVEVIRAVRNIRSEVNTPLSKPIVLEIKPKDTTYKEILEQNISYIERFCNPEQVTISFDVEASKTAMTAVVSGAEIFIPLEALIDLNVEIARLEKELEKWNKEVARVQGKLNNERFISKAPESVVAEERLKEKDYLDKKASVLERIETLKEV.

A 'HIGH' region motif is present at residues 51 to 61; the sequence is PNVTGKLHLGH. The 'KMSKS' region motif lies at 527–531; sequence KMSKS. K530 is a binding site for ATP. A coiled-coil region spans residues 811–847; the sequence is LEALIDLNVEIARLEKELEKWNKEVARVQGKLNNERF.

It belongs to the class-I aminoacyl-tRNA synthetase family. ValS type 1 subfamily. In terms of assembly, monomer.

It localises to the cytoplasm. It catalyses the reaction tRNA(Val) + L-valine + ATP = L-valyl-tRNA(Val) + AMP + diphosphate. In terms of biological role, catalyzes the attachment of valine to tRNA(Val). As ValRS can inadvertently accommodate and process structurally similar amino acids such as threonine, to avoid such errors, it has a 'posttransfer' editing activity that hydrolyzes mischarged Thr-tRNA(Val) in a tRNA-dependent manner. This chain is Valine--tRNA ligase, found in Listeria monocytogenes serovar 1/2a (strain ATCC BAA-679 / EGD-e).